The sequence spans 218 residues: Octanoyltransferase (218 aa).

The 188-residue stretch at 30-217 (GEAGELVWLV…SFARNFPPLA (188 aa)) folds into the BPL/LPL catalytic domain. Residues 68 to 75 (RGGQYTYH), 148 to 150 (AIG), and 161 to 163 (GIA) contribute to the substrate site. Cys-179 acts as the Acyl-thioester intermediate in catalysis.

The protein belongs to the LipB family.

It localises to the cytoplasm. It catalyses the reaction octanoyl-[ACP] + L-lysyl-[protein] = N(6)-octanoyl-L-lysyl-[protein] + holo-[ACP] + H(+). It functions in the pathway protein modification; protein lipoylation via endogenous pathway; protein N(6)-(lipoyl)lysine from octanoyl-[acyl-carrier-protein]: step 1/2. Its function is as follows. Catalyzes the transfer of endogenously produced octanoic acid from octanoyl-acyl-carrier-protein onto the lipoyl domains of lipoate-dependent enzymes. Lipoyl-ACP can also act as a substrate although octanoyl-ACP is likely to be the physiological substrate. This Paracoccus denitrificans (strain Pd 1222) protein is Octanoyltransferase.